A 328-amino-acid chain; its full sequence is Mannitol-1-phosphate 5-dehydrogenase (328 aa).

3–14 lines the NAD(+) pocket; that stretch reads LIHFGAGNIGCG.

This sequence belongs to the mannitol dehydrogenase family.

The catalysed reaction is D-mannitol 1-phosphate + NAD(+) = beta-D-fructose 6-phosphate + NADH + H(+). The chain is Mannitol-1-phosphate 5-dehydrogenase (mtlD) from Mycoplasma mycoides subsp. mycoides SC (strain CCUG 32753 / NCTC 10114 / PG1).